The chain runs to 342 residues: Nucleoid-associated protein Shewmr7_2293 (342 aa).

Belongs to the YejK family.

The protein resides in the cytoplasm. Its subcellular location is the nucleoid. This chain is Nucleoid-associated protein Shewmr7_2293, found in Shewanella sp. (strain MR-7).